The sequence spans 285 residues: NAD kinase (285 aa).

Catalysis depends on Asp67, which acts as the Proton acceptor. Residues 67 to 68, 141 to 142, Arg152, Lys169, Asp171, 182 to 187, and Gln242 each bind NAD(+); these read DG, ND, and TGYSLS.

The protein belongs to the NAD kinase family. Requires a divalent metal cation as cofactor.

Its subcellular location is the cytoplasm. It carries out the reaction NAD(+) + ATP = ADP + NADP(+) + H(+). In terms of biological role, involved in the regulation of the intracellular balance of NAD and NADP, and is a key enzyme in the biosynthesis of NADP. Catalyzes specifically the phosphorylation on 2'-hydroxyl of the adenosine moiety of NAD to yield NADP. The sequence is that of NAD kinase from Trichlorobacter lovleyi (strain ATCC BAA-1151 / DSM 17278 / SZ) (Geobacter lovleyi).